Consider the following 322-residue polypeptide: MEADLSDFNIDAPRWDQCTFLGRVKHFFNITDPRTVLVPERELDWAKVMVEQSRMGTVPPGTQVEQLFYAKKLYDSAFHPDTGHKMNVIGRMSFQVPGGMIITGFMLQFYRTMPAVIFWQWVNQSFNALVNYTNRNAASPTSVRQMAVSYITATTTAVATAVGMNMLTKRAPPLVGRWVPFAAVAAANCVNIPMMRQQELIQGICVKDRNHNEIGHSRRAAAIGITQVVISRITMAAPGMILLPVLMERLEKLRFVQRVRVLHAPLQVLLSGCFLIFMVPVACGLFPQQCELPVSYLEPELQDTIKAKYREPVPHVYFNKGL.

At methionine 1 the chain carries N-acetylmethionine. 5 helical membrane passes run methionine 100 to valine 122, serine 142 to methionine 164, leucine 174 to isoleucine 192, valine 228 to leucine 250, and proline 265 to proline 287.

This sequence belongs to the sideroflexin family.

The protein localises to the mitochondrion inner membrane. The protein resides in the mitochondrion outer membrane. It carries out the reaction L-serine(in) = L-serine(out). Its function is as follows. Mitochondrial amino-acid transporter that mediates transport of serine into mitochondria. Involved in mitochondrial iron homeostasis by regulating heme biosynthesis. In Bos taurus (Bovine), this protein is Sideroflexin-2.